A 311-amino-acid chain; its full sequence is uncharacterized protein (311 aa).

Over residues 1 to 12 (MPATDTNSTHTT) the composition is skewed to polar residues. 2 disordered regions span residues 1 to 44 (MPAT…DEEH) and 205 to 268 (ERPS…ATVH). Residues 35–44 (TSDKHADEEH) show a composition bias toward basic and acidic residues.

This sequence belongs to the HHV-5 HKLF1 family.

This is an uncharacterized protein from Human cytomegalovirus (strain AD169) (HHV-5).